A 412-amino-acid chain; its full sequence is Maintenance of mitochondrial morphology protein 1 (412 aa).

Over Met1 to Gly81 the chain is Lumenal. Residues Leu82 to Phe102 form a helical membrane-spanning segment. Residues Ala103–Leu412 are Cytoplasmic-facing. The SMP-LTD domain maps to Ser165–Pro382. The disordered stretch occupies residues Lys389–Leu412. Over residues Lys397–Leu412 the composition is skewed to polar residues.

The protein belongs to the MMM1 family. As to quaternary structure, homodimer. Component of the ER-mitochondria encounter structure (ERMES) or MDM complex, composed of MMM1, MDM10, MDM12 and MDM34. An MMM1 homodimer associates with one molecule of MDM12 on each side in a pairwise head-to-tail manner, and the SMP-LTD domains of MMM1 and MDM12 generate a continuous hydrophobic tunnel for phospholipid trafficking.

Its subcellular location is the endoplasmic reticulum membrane. Functionally, component of the ERMES/MDM complex, which serves as a molecular tether to connect the endoplasmic reticulum (ER) and mitochondria. Components of this complex are involved in the control of mitochondrial shape and protein biogenesis, and function in nonvesicular lipid trafficking between the ER and mitochondria. The MDM12-MMM1 subcomplex functions in the major beta-barrel assembly pathway that is responsible for biogenesis of all outer membrane beta-barrel proteins, and acts in a late step after the SAM complex. The MDM10-MDM12-MMM1 subcomplex further acts in the TOM40-specific pathway after the action of the MDM12-MMM1 complex. Essential for establishing and maintaining the structure of mitochondria and maintenance of mtDNA nucleoids. The sequence is that of Maintenance of mitochondrial morphology protein 1 from Candida tropicalis (strain ATCC MYA-3404 / T1) (Yeast).